Here is a 377-residue protein sequence, read N- to C-terminus: Chaperone protein DnaJ (377 aa).

Residues 5-70 enclose the J domain; the sequence is DYYEVLEVSR…EKRTIYDRYG (66 aa). The CR-type zinc finger occupies 138–215; that stretch reads GCEKKIDITY…CQGKGYHEET (78 aa). Positions 151, 154, 167, 170, 189, 192, 203, and 206 each coordinate Zn(2+). 4 CXXCXGXG motif repeats span residues 151–158, 167–174, 189–196, and 203–210; these read CEECGGTG, CDYCGGQG, CPKCHGEG, and CPSCQGKG.

Belongs to the DnaJ family. As to quaternary structure, homodimer. It depends on Zn(2+) as a cofactor.

It localises to the cytoplasm. Functionally, participates actively in the response to hyperosmotic and heat shock by preventing the aggregation of stress-denatured proteins and by disaggregating proteins, also in an autonomous, DnaK-independent fashion. Unfolded proteins bind initially to DnaJ; upon interaction with the DnaJ-bound protein, DnaK hydrolyzes its bound ATP, resulting in the formation of a stable complex. GrpE releases ADP from DnaK; ATP binding to DnaK triggers the release of the substrate protein, thus completing the reaction cycle. Several rounds of ATP-dependent interactions between DnaJ, DnaK and GrpE are required for fully efficient folding. Also involved, together with DnaK and GrpE, in the DNA replication of plasmids through activation of initiation proteins. This chain is Chaperone protein DnaJ, found in Sulfurovum sp. (strain NBC37-1).